A 162-amino-acid chain; its full sequence is Zinc finger protein 593 homolog (162 aa).

The C2H2-type zinc-finger motif lies at 59–83; the sequence is FYCVHCAKYFIDDTAMQAHFRTKVH. The tract at residues 110 to 162 is disordered; that stretch reads VKPKKRAMETQPSKEDVVAGKRIRVEVVPEDTDATDSPSTSKTKRKKVEKMET. Positions 115–136 are enriched in basic and acidic residues; it reads RAMETQPSKEDVVAGKRIRVEV. Residues 151-162 are compositionally biased toward basic residues; the sequence is KTKRKKVEKMET.

The protein belongs to the ZNF593/BUD20 C2H2-type zinc-finger protein family. Associates with pre-60S ribosomal particles; released from the pre-60S particle very early in the cytoplasm.

It localises to the nucleus. It is found in the cytoplasm. In terms of biological role, involved in pre-60S ribosomal particles maturation by promoting the nuclear export of the 60S ribosome. In Drosophila melanogaster (Fruit fly), this protein is Zinc finger protein 593 homolog.